The following is a 38-amino-acid chain: Photosystem I reaction center subunit IX (38 aa).

Residues 4-24 traverse the membrane as a helical segment; sequence FLTTAPVFSAIWFTLTAGIMI.

The protein belongs to the PsaJ family.

It is found in the plastid. The protein localises to the organellar chromatophore thylakoid membrane. In terms of biological role, may help in the organization of the PsaE and PsaF subunits. In Paulinella chromatophora, this protein is Photosystem I reaction center subunit IX.